A 150-amino-acid chain; its full sequence is uncharacterized protein (150 aa).

Transmembrane regions (helical) follow at residues 32–52 (ILYG…AVSL), 64–84 (FNWL…FISG), 94–114 (IGAL…YLGF), and 123–143 (LIFH…GVNM).

The protein resides in the cell membrane. This is an uncharacterized protein from Bacillus subtilis (strain 168).